The following is a 241-amino-acid chain: Glucosamine-6-phosphate deaminase (241 aa).

Aspartate 67 acts as the Proton acceptor; for enolization step in catalysis. Asparagine 136 serves as the catalytic For ring-opening step. Catalysis depends on histidine 138, which acts as the Proton acceptor; for ring-opening step. The active-site For ring-opening step is glutamate 143.

It belongs to the glucosamine/galactosamine-6-phosphate isomerase family. NagB subfamily.

The catalysed reaction is alpha-D-glucosamine 6-phosphate + H2O = beta-D-fructose 6-phosphate + NH4(+). The protein operates within amino-sugar metabolism; N-acetylneuraminate degradation; D-fructose 6-phosphate from N-acetylneuraminate: step 5/5. In terms of biological role, catalyzes the reversible isomerization-deamination of glucosamine 6-phosphate (GlcN6P) to form fructose 6-phosphate (Fru6P) and ammonium ion. This is Glucosamine-6-phosphate deaminase from Halothermothrix orenii (strain H 168 / OCM 544 / DSM 9562).